Here is an 893-residue protein sequence, read N- to C-terminus: UPF0182 protein CLK_3152 (893 aa).

7 helical membrane passes run 9 to 29, 49 to 69, 94 to 114, 154 to 174, 202 to 222, 246 to 266, and 273 to 293; these read IPLF…NFII, AIII…WMYY, LFFI…SSSY, VIIS…FILE, LAIV…IKIW, FYKI…LSIV, and VSIC…ASFL.

Belongs to the UPF0182 family.

The protein localises to the cell membrane. This chain is UPF0182 protein CLK_3152, found in Clostridium botulinum (strain Loch Maree / Type A3).